Reading from the N-terminus, the 722-residue chain is Mating-type switching protein swi2 (722 aa).

Disordered stretches follow at residues 1 to 35 (MNVNKKQESIPVNTGSESISSNDNERFEQGKGVGS) and 301 to 342 (SEEF…PLPS). Residues 9 to 22 (SIPVNTGSESISSN) show a composition bias toward polar residues. Positions 302–316 (EEFDFEPSREDEDFP) are enriched in acidic residues. Over residues 319–332 (TSDSTGQDPLSSEP) the composition is skewed to polar residues.

In terms of assembly, interacts with swi5 and rhp51.

Functionally, required for normal mating-type switching. This chain is Mating-type switching protein swi2 (swi2), found in Schizosaccharomyces pombe (strain 972 / ATCC 24843) (Fission yeast).